Consider the following 91-residue polypeptide: Small ribosomal subunit protein bS20 (91 aa).

The protein belongs to the bacterial ribosomal protein bS20 family.

Binds directly to 16S ribosomal RNA. The chain is Small ribosomal subunit protein bS20 from Thermosipho melanesiensis (strain DSM 12029 / CIP 104789 / BI429).